The sequence spans 630 residues: 1-deoxy-D-xylulose-5-phosphate synthase (630 aa).

Thiamine diphosphate is bound by residues His72 and 113–115 (GHS). Asp144 is a binding site for Mg(2+). Thiamine diphosphate contacts are provided by residues 145 to 146 (GA), Asn173, Tyr284, and Glu367. Asn173 contacts Mg(2+).

It belongs to the transketolase family. DXPS subfamily. In terms of assembly, homodimer. Mg(2+) is required as a cofactor. Thiamine diphosphate serves as cofactor.

It catalyses the reaction D-glyceraldehyde 3-phosphate + pyruvate + H(+) = 1-deoxy-D-xylulose 5-phosphate + CO2. It participates in metabolic intermediate biosynthesis; 1-deoxy-D-xylulose 5-phosphate biosynthesis; 1-deoxy-D-xylulose 5-phosphate from D-glyceraldehyde 3-phosphate and pyruvate: step 1/1. Functionally, catalyzes the acyloin condensation reaction between C atoms 2 and 3 of pyruvate and glyceraldehyde 3-phosphate to yield 1-deoxy-D-xylulose-5-phosphate (DXP). This chain is 1-deoxy-D-xylulose-5-phosphate synthase, found in Geobacillus thermodenitrificans (strain NG80-2).